The following is an 84-amino-acid chain: Exodeoxyribonuclease 7 small subunit (84 aa).

Belongs to the XseB family. As to quaternary structure, heterooligomer composed of large and small subunits.

It is found in the cytoplasm. The enzyme catalyses Exonucleolytic cleavage in either 5'- to 3'- or 3'- to 5'-direction to yield nucleoside 5'-phosphates.. Bidirectionally degrades single-stranded DNA into large acid-insoluble oligonucleotides, which are then degraded further into small acid-soluble oligonucleotides. This chain is Exodeoxyribonuclease 7 small subunit, found in Caulobacter vibrioides (strain ATCC 19089 / CIP 103742 / CB 15) (Caulobacter crescentus).